A 337-amino-acid polypeptide reads, in one-letter code: Transcription initiation factor IIB (337 aa).

A TFIIB-type zinc finger spans residues 36-68 (SVQSVCPECGSRQLVHDYERAELVCQNCGLVLD). Residues Cys-41, Cys-44, Cys-60, and Cys-63 each coordinate Zn(2+). 2 tandem repeats follow at residues 154–237 (SELD…SREL) and 248–329 (DYVP…ELAE).

It belongs to the TFIIB family.

Stabilizes TBP binding to an archaeal box-A promoter. Also responsible for recruiting RNA polymerase II to the pre-initiation complex (DNA-TBP-TFIIB). The protein is Transcription initiation factor IIB of Methanoculleus marisnigri (strain ATCC 35101 / DSM 1498 / JR1).